Here is a 209-residue protein sequence, read N- to C-terminus: Thymidylate kinase (209 aa).

ATP is bound at residue 13–20 (GLEGAGKS).

It belongs to the thymidylate kinase family.

It carries out the reaction dTMP + ATP = dTDP + ADP. In terms of biological role, phosphorylation of dTMP to form dTDP in both de novo and salvage pathways of dTTP synthesis. This is Thymidylate kinase from Shewanella sp. (strain ANA-3).